We begin with the raw amino-acid sequence, 243 residues long: 2,3-bisphosphoglycerate-dependent phosphoglycerate mutase (243 aa).

Substrate-binding positions include 8 to 15 (RHGQSEWN), 21 to 22 (TG), Arg-60, 87 to 90 (ERHY), Lys-98, 114 to 115 (RR), and 183 to 184 (GN). Catalysis depends on His-9, which acts as the Tele-phosphohistidine intermediate. Glu-87 serves as the catalytic Proton donor/acceptor.

This sequence belongs to the phosphoglycerate mutase family. BPG-dependent PGAM subfamily.

It carries out the reaction (2R)-2-phosphoglycerate = (2R)-3-phosphoglycerate. It functions in the pathway carbohydrate degradation; glycolysis; pyruvate from D-glyceraldehyde 3-phosphate: step 3/5. Its function is as follows. Catalyzes the interconversion of 2-phosphoglycerate and 3-phosphoglycerate. The protein is 2,3-bisphosphoglycerate-dependent phosphoglycerate mutase of Clostridium acetobutylicum (strain ATCC 824 / DSM 792 / JCM 1419 / IAM 19013 / LMG 5710 / NBRC 13948 / NRRL B-527 / VKM B-1787 / 2291 / W).